The primary structure comprises 251 residues: Copper transport protein CTR1 (251 aa).

Residues 90–110 (AFGIFVLLFFVAFLARMLEFV) form a helical membrane-spanning segment. Residues 157–173 (DESIDKQNSPQHEETTK) are compositionally biased toward basic and acidic residues. Positions 157-176 (DESIDKQNSPQHEETTKARG) are disordered. The helical transmembrane segment at 208–228 (MLAAMTYTLTYFFAVVIGSGV) threads the bilayer.

Oligomer.

It is found in the cell membrane. Functionally, required for high affinity copper (probably reduced Cu I) transport into the cell. This chain is Copper transport protein CTR1 (CTR1), found in Candida albicans (strain SC5314 / ATCC MYA-2876) (Yeast).